Reading from the N-terminus, the 471-residue chain is Secretogranin-3 (471 aa).

The N-terminal stretch at 1 to 22 is a signal peptide; the sequence is MGFLWTGSWILVLVLNSGPIQA. Disordered stretches follow at residues 24-45, 89-108, and 345-404; these read PKPEGSQDKSLHNRELSAERPL, TVEKERQSIRSPPFDNQLNV, and KLEK…TDEA. A compositionally biased stretch (basic and acidic residues) spans 28–45; it reads GSQDKSLHNRELSAERPL. At S40 the chain carries Phosphoserine. S40 carries an O-linked (Xyl...) (chondroitin sulfate) serine glycan. 2 stretches are compositionally biased toward basic and acidic residues: residues 345–355 and 364–404; these read KLEKNTTDSKS and KSQE…TDEA. S365 carries the phosphoserine modification.

In terms of assembly, interacts with CHGA. Interacts with secretogranin II/SCG2. Interacts (via C-terminus) with CPE. As to expression, expressed in various brain areas, with highest levels in the arcuate nucleus and the lateral hypothalamic area, as well as the paraventricular nucleus and the ventromedial hypothalamus (at protein level).

It localises to the cytoplasmic vesicle. Its subcellular location is the secretory vesicle. The protein localises to the secretory vesicle membrane. It is found in the secreted. Functionally, member of the granin protein family that regulates the biogenesis of secretory granules. Acts as a sorting receptor for intragranular proteins including chromogranin A/CHGA. May also play a role in angiogenesis. Promotes endothelial proliferation, migration and tube formation through MEK/ERK signaling pathway. The chain is Secretogranin-3 (Scg3) from Mus musculus (Mouse).